A 278-amino-acid polypeptide reads, in one-letter code: Small ribosomal subunit protein uS3 (278 aa).

Positions 39-107 constitute a KH type-2 domain; that stretch reads LRKAIAKKYV…KVQLNIVEIS (69 aa). The tract at residues 244–278 is disordered; sequence AKPKRVTKKAEAEASAEEKPKRAAKKAENITKEEE. A compositionally biased stretch (basic and acidic residues) spans 251–278; it reads KKAEAEASAEEKPKRAAKKAENITKEEE.

It belongs to the universal ribosomal protein uS3 family. In terms of assembly, part of the 30S ribosomal subunit. Forms a tight complex with proteins S10 and S14.

In terms of biological role, binds the lower part of the 30S subunit head. Binds mRNA in the 70S ribosome, positioning it for translation. In Dehalococcoides mccartyi (strain ATCC BAA-2266 / KCTC 15142 / 195) (Dehalococcoides ethenogenes (strain 195)), this protein is Small ribosomal subunit protein uS3.